The following is a 234-amino-acid chain: MAQLDTQKIISTIANSKKTTPVKVYLKGKLSELHFPKSVHAFIGKHTGTVIGDWAEIKPILKKAKLDDYYVETAGRNTGVPLLDIKAANARIEPGAIIRDQVLIGDNAVIMMGAIINIGAEIGAGTMIDMGAVLGGRAIVGKHCHIGAGTVLAGVVEPPSAKPVTIGDHVMIGANAVVLEGTTVGEGAVIAAGAVVINDVPAHTVVAGVPAKVIKQVNDQTEAKTVLLDELRKL.

It belongs to the transferase hexapeptide repeat family. DapH subfamily.

It carries out the reaction (S)-2,3,4,5-tetrahydrodipicolinate + acetyl-CoA + H2O = L-2-acetamido-6-oxoheptanedioate + CoA. The protein operates within amino-acid biosynthesis; L-lysine biosynthesis via DAP pathway; LL-2,6-diaminopimelate from (S)-tetrahydrodipicolinate (acetylase route): step 1/3. Functionally, catalyzes the transfer of an acetyl group from acetyl-CoA to tetrahydrodipicolinate. In Lacticaseibacillus casei (strain BL23) (Lactobacillus casei), this protein is 2,3,4,5-tetrahydropyridine-2,6-dicarboxylate N-acetyltransferase.